A 278-amino-acid chain; its full sequence is Octanoyl-[GcvH]:protein N-octanoyltransferase (278 aa).

A BPL/LPL catalytic domain is found at 41-247; it reads DISDNVVRTW…AIKDLGGVLN (207 aa). Catalysis depends on C146, which acts as the Acyl-thioester intermediate.

This sequence belongs to the octanoyltransferase LipL family.

It catalyses the reaction N(6)-octanoyl-L-lysyl-[glycine-cleavage complex H protein] + L-lysyl-[lipoyl-carrier protein] = N(6)-octanoyl-L-lysyl-[lipoyl-carrier protein] + L-lysyl-[glycine-cleavage complex H protein]. Its pathway is protein modification; protein lipoylation via endogenous pathway; protein N(6)-(lipoyl)lysine from octanoyl-[acyl-carrier-protein]. In terms of biological role, catalyzes the amidotransfer (transamidation) of the octanoyl moiety from octanoyl-GcvH to the lipoyl domain of the E2 subunit of lipoate-dependent enzymes. The sequence is that of Octanoyl-[GcvH]:protein N-octanoyltransferase from Staphylococcus aureus (strain NCTC 8325 / PS 47).